Reading from the N-terminus, the 246-residue chain is uncharacterized protein (246 aa).

The first 30 residues, 1–30, serve as a signal peptide directing secretion; sequence MKKKQVSHAIIISVMLSFVIAVFHTIHASE.

This is an uncharacterized protein from Bacillus subtilis (strain 168).